The primary structure comprises 407 residues: 8-amino-7-oxononanoate synthase (407 aa).

Arg24 is a substrate binding site. Gly111–Phe112 provides a ligand contact to pyridoxal 5'-phosphate. His137 lines the substrate pocket. Pyridoxal 5'-phosphate is bound by residues Ser183, His211, and Thr239. Position 242 is an N6-(pyridoxal phosphate)lysine (Lys242). Substrate is bound at residue Thr356.

This sequence belongs to the class-II pyridoxal-phosphate-dependent aminotransferase family. BioF subfamily. Homodimer. Pyridoxal 5'-phosphate is required as a cofactor.

The enzyme catalyses 6-carboxyhexanoyl-[ACP] + L-alanine + H(+) = (8S)-8-amino-7-oxononanoate + holo-[ACP] + CO2. The protein operates within cofactor biosynthesis; biotin biosynthesis. Catalyzes the decarboxylative condensation of pimeloyl-[acyl-carrier protein] and L-alanine to produce 8-amino-7-oxononanoate (AON), [acyl-carrier protein], and carbon dioxide. The polypeptide is 8-amino-7-oxononanoate synthase (Stenotrophomonas maltophilia (strain R551-3)).